The chain runs to 392 residues: Fasciculation and elongation protein zeta-1 (392 aa).

Residues Met1–His36 form a disordered region. Residue Ser58 is modified to Phosphoserine. The interval Met175–Ile196 is disordered. Residues Asp180–Gly194 are compositionally biased toward acidic residues. A coiled-coil region spans residues Ser230 to Ser298. Residues Ser298 and Ser316 each carry the phosphoserine modification.

Belongs to the zygin family. In terms of assembly, homodimer. Interacts with the NH2-terminal variable region (V1) of PKC zeta and weakly with that of PKC epsilon. Interacts with UBE4B and SAP30L. Interacts with SCOC and ULK1; SCOC interferes with ULK1-binding to FEZ1. Directly interacts with SCOC and UVRAG. Stabilizes the interaction between SCOC and UVRAG during amino acid starvation. Phosphorylated by protein kinase C zeta; which enhances interaction with UBE4B and polyubiquitination. Post-translationally, polyubiquitinated in a UBE4B-dependent manner; which does not lead to proteasomal degradation and may be important for neurogenic activity. Polyubiquitin linkage seems to be mainly through Lys-26.

The protein localises to the cytoplasm. Its subcellular location is the cytoskeleton. The protein resides in the microtubule organizing center. It is found in the centrosome. It localises to the cell membrane. In terms of biological role, may be involved in axonal outgrowth as component of the network of molecules that regulate cellular morphology and axon guidance machinery. May participate in the transport of mitochondria and other cargos along microtubules. This Mus musculus (Mouse) protein is Fasciculation and elongation protein zeta-1 (Fez1).